Reading from the N-terminus, the 187-residue chain is Protein GrpE (187 aa).

Residues 1 to 30 (MEKKETKSESEKTNKQDNKNTKSQKKENLN) are disordered.

This sequence belongs to the GrpE family. In terms of assembly, homodimer.

It localises to the cytoplasm. In terms of biological role, participates actively in the response to hyperosmotic and heat shock by preventing the aggregation of stress-denatured proteins, in association with DnaK and GrpE. It is the nucleotide exchange factor for DnaK and may function as a thermosensor. Unfolded proteins bind initially to DnaJ; upon interaction with the DnaJ-bound protein, DnaK hydrolyzes its bound ATP, resulting in the formation of a stable complex. GrpE releases ADP from DnaK; ATP binding to DnaK triggers the release of the substrate protein, thus completing the reaction cycle. Several rounds of ATP-dependent interactions between DnaJ, DnaK and GrpE are required for fully efficient folding. The chain is Protein GrpE from Borreliella burgdorferi (strain ATCC 35210 / DSM 4680 / CIP 102532 / B31) (Borrelia burgdorferi).